We begin with the raw amino-acid sequence, 102 residues long: Defensin-like protein 285 (102 aa).

The first 28 residues, 1–28 (MTNLYFKTAFLLSLLLLSFSYQSKLIEA), serve as a signal peptide directing secretion. Intrachain disulfides connect Cys39–Cys100, Cys64–Cys83, Cys70–Cys88, and Cys75–Cys90.

It belongs to the DEFL family.

The protein resides in the secreted. The protein is Defensin-like protein 285 of Arabidopsis thaliana (Mouse-ear cress).